The sequence spans 65 residues: Non-structural protein 5a (65 aa).

The polypeptide is Non-structural protein 5a (Avian infectious bronchitis virus (strain Beaudette) (IBV)).